Reading from the N-terminus, the 218-residue chain is PKHD-type hydroxylase Sala_1910 (218 aa).

The region spanning 74–172 (RIAPPLLTRY…RLVAITFIQS (99 aa)) is the Fe2OG dioxygenase domain. Positions 92, 94, and 153 each coordinate Fe cation. Position 163 (arginine 163) interacts with 2-oxoglutarate.

Fe(2+) serves as cofactor. The cofactor is L-ascorbate.

This Sphingopyxis alaskensis (strain DSM 13593 / LMG 18877 / RB2256) (Sphingomonas alaskensis) protein is PKHD-type hydroxylase Sala_1910.